The chain runs to 163 residues: Small ribosomal subunit protein uS3m (163 aa).

A mitochondrion-targeting transit peptide spans 1 to 31; that stretch reads MAASLIRQTKLLSVFSSAGCFRSIHSTAACL.

It belongs to the universal ribosomal protein uS3 family. Component of the mitochondrial ribosome small subunit (28S) which comprises a 12S rRNA and about 30 distinct proteins.

Its subcellular location is the mitochondrion. This Danio rerio (Zebrafish) protein is Small ribosomal subunit protein uS3m (mrps24).